A 1259-amino-acid polypeptide reads, in one-letter code: Ankyrin repeat and sterile alpha motif domain-containing protein 1B (1259 aa).

7 ANK repeats span residues 2–31, 58–87, 91–120, 127–156, 160–189, 193–222, and 225–254; these read GKDQ…GGIL, SGYT…STNV, KGYF…SHSR, ENET…DPTI, KLET…NLMS, RKHT…DVSC, and EKGS…DANI. The tract at residues 298 to 325 is disordered; the sequence is HAQEDTAQETHLSSPAESPQKTKSETVT. Over residues 306–325 the composition is skewed to polar residues; that stretch reads ETHLSSPAESPQKTKSETVT. 5 positions are modified to phosphoserine: Ser-310, Ser-311, Ser-315, Ser-353, and Ser-364. Disordered regions lie at residues 367–401, 490–513, 556–614, and 631–661; these read ELGK…SCGP, PGTS…SPDT, CTSF…GSSP, and TCED…EPSV. The span at 371–384 shows a compositional bias: polar residues; the sequence is NGSQSVRTSSTINL. At Thr-503 the chain carries Phosphothreonine. Ser-507 and Ser-510 each carry phosphoserine. Residues 556-574 show a composition bias toward low complexity; it reads CTSFTSSPAASPPTSSVET. Basic and acidic residues predominate over residues 575–587; sequence TEVKNEGAEHADD. The residue at position 738 (Ser-738) is a Phosphoserine. The segment at 753–776 is disordered; sequence VNWSKSSTAERSSKDNSERTPSFT. A Phosphothreonine modification is found at Thr-772. Ser-774 carries the post-translational modification Phosphoserine. 2 consecutive SAM domains span residues 809–875 and 883–948; these read CPVQ…LPKM and YHPT…RLHD. Phosphotyrosine is present on Tyr-900. A short sequence motif (nuclear localization signal) is located at residue His-934. Residues 943–988 form a disordered region; it reads GDRLHDDPPQKPPRSITLREPSGNHTPPQLSPSLSQSTYTTGGSLD. The segment covering 968 to 983 has biased composition (low complexity); sequence TPPQLSPSLSQSTYTT. A Phosphoserine modification is found at Ser-973. Tyr-1006 carries the post-translational modification Phosphotyrosine. The region spanning 1055 to 1212 is the PID domain; sequence IFQSCDYKAF…SFENKPSKPI (158 aa). The segment at 1196-1216 is disordered; that stretch reads HSSTLPESFENKPSKPIPKPR.

Interacts with EPHA8. Isoform 2 interacts with COIL.

The protein localises to the cytoplasm. The protein resides in the nucleus. It localises to the postsynaptic density. It is found in the cell projection. Its subcellular location is the dendritic spine. Functionally, isoform 2 may participate in the regulation of nucleoplasmic coilin protein interactions in neuronal and transformed cells. This chain is Ankyrin repeat and sterile alpha motif domain-containing protein 1B (Anks1b), found in Mus musculus (Mouse).